The primary structure comprises 663 residues: Zeaxanthin epoxidase, chloroplastic (663 aa).

A chloroplast-targeting transit peptide spans 1-50 (MYSTVFYTSVHPSTSAFSRKQLPLLISKDFPTELYHSLPCSRSLENGQIK). Residues 81–109 (KVLV…LVFE) and 359–372 (TFSW…LLGD) each bind FAD. The FHA domain occupies 547 to 611 (LVLSRDENMP…HGTWITDNEG (65 aa)).

The cofactor is FAD. Higher expression in leaves than in roots.

Its subcellular location is the plastid. It localises to the chloroplast membrane. The protein resides in the chloroplast thylakoid membrane. It carries out the reaction all-trans-zeaxanthin + 4 reduced [2Fe-2S]-[ferredoxin] + 2 O2 + 4 H(+) = all-trans-violaxanthin + 4 oxidized [2Fe-2S]-[ferredoxin] + 2 H2O. The protein operates within plant hormone biosynthesis; abscisate biosynthesis. Converts zeaxanthin into antheraxanthin and subsequently violaxanthin. Involved in the epoxidation of zeaxanthin. Plays an important role in resistance to stresses, seed development and dormancy. The protein is Zeaxanthin epoxidase, chloroplastic (ABA2) of Nicotiana plumbaginifolia (Leadwort-leaved tobacco).